The sequence spans 841 residues: ATP-dependent helicase Lhr-Core (841 aa).

ATP is bound by residues Gln39, Lys62, Thr63, Asp181, Glu182, Ile352, Arg369, and His372. In terms of domain architecture, Helicase ATP-binding spans 43-234 (IKEIHEGKNV…FLVGNGRDCY (192 aa)). A DEVH box motif is present at residues 181 to 184 (DEIH). The Helicase C-terminal domain occupies 266–416 (RLYNLLKKLI…RIHIPKNCLD (151 aa)). The WH domain stretch occupies residues 417-500 (VLAQHLVGMA…IYYMNVGTIP (84 aa)). Residues 501-841 (DETAVDVIAD…MEFISMKGKK (341 aa)) are domain 4.

It belongs to the Lhr helicase family. Lhr-Core subfamily. As to quaternary structure, monomer.

The enzyme catalyses Couples ATP hydrolysis with the unwinding of duplex DNA by translocating in the 3'-5' direction.. It catalyses the reaction ATP + H2O = ADP + phosphate + H(+). DNA helicase that loads on single-stranded (ss)DNA and translocates in a 3'-5' direction, probably involved in DNA repair. Archaeal orthologs have double-stranded (ds)DNA and/or RNA:DNA helicase activity. This Methanocaldococcus jannaschii (strain ATCC 43067 / DSM 2661 / JAL-1 / JCM 10045 / NBRC 100440) (Methanococcus jannaschii) protein is ATP-dependent helicase Lhr-Core.